We begin with the raw amino-acid sequence, 354 residues long: MGNCLSSSDQKEAKDRSVAIDKQIEQDSRQFKKECKILLLGSGESGKSTIVKQMKIIHQNGYSKDELLLYRLTVIKNLVDSAQAIVLALRKFKMEPEMPENRENVDVILQYRVDADPGATLDHPMARKVDSLWKDPIIPAIMERSSEFYLMDSAAYFFDNVNRIGQADYVPDENDVLRARSKTTGISETRFNMGQLSIHLFDVGGQRSERKKWIHCFEAVTSIIFCVALSEYDQVLLEESGQNRMAESLVLFESVVNSRWFLRTSVILFLNKIDIFKQKIPKQPLSKYFPEYSGGPDINKAAKYILWRFTQTNRARLSIYPHLTQATDTSNIRLVFAAVKETILTNALKDSGIL.

Glycine 2 carries N-myristoyl glycine lipidation. Cysteine 4 is lipidated: S-palmitoyl cysteine. A G-alpha domain is found at 33-354 (KECKILLLGS…TNALKDSGIL (322 aa)). The G1 motif stretch occupies residues 36–49 (KILLLGSGESGKST). Residues 41–48 (GSGESGKS), 177–183 (LRARSKT), 202–206 (DVGGQ), 271–274 (NKID), and alanine 326 contribute to the GTP site. Residues serine 48 and threonine 183 each coordinate Mg(2+). The segment at 175–183 (DVLRARSKT) is G2 motif. The G3 motif stretch occupies residues 198 to 207 (IHLFDVGGQR). The tract at residues 267 to 274 (ILFLNKID) is G4 motif. Residues 324–329 (TQATDT) form a G5 motif region.

This sequence belongs to the G-alpha family. G proteins are composed of 3 units; alpha, beta and gamma. The alpha chain contains the guanine nucleotide binding site.

In terms of biological role, guanine nucleotide-binding proteins (G proteins) are involved as modulators or transducers in various transmembrane signaling systems. This subunit is involved in cAMP regulation and morphogenesis. It is essential for dimorphic switching in haploid cells. In Ustilago hordei (Barley covered smut fungus), this protein is Guanine nucleotide-binding protein alpha-3 subunit (FIL1).